A 133-amino-acid chain; its full sequence is Putative nickel-responsive regulator (133 aa).

Positions 74, 85, 87, and 93 each coordinate Ni(2+).

This sequence belongs to the transcriptional regulatory CopG/NikR family. Requires Ni(2+) as cofactor.

Transcriptional regulator. This Saccharolobus solfataricus (strain ATCC 35092 / DSM 1617 / JCM 11322 / P2) (Sulfolobus solfataricus) protein is Putative nickel-responsive regulator.